The following is a 1456-amino-acid chain: ABC transporter G family member 44 (1456 aa).

Residues 169 to 442 (ANLLHVVPNK…FESMGFKCPD (274 aa)) enclose the ABC transporter 1 domain. Position 202-209 (202-209 (GPPGSGKT)) interacts with ATP. Positions 520–733 (ELLRTCIARE…AMNAIAVNEF (214 aa)) constitute an ABC transmembrane type-2 1 domain. 6 helical membrane-spanning segments follow: residues 538–558 (FVYR…MTLF), 571–591 (GIVY…NGFS), 626–646 (IPIS…VIGF), 658–678 (LLLL…AALG), 682–702 (VVAN…SGFI), and 768–788 (IGVG…TIAL). A disordered region spans residues 812–844 (NITGETINDPRNSASSGQTTNTRRNAAPGEASE). The span at 814 to 835 (TGETINDPRNSASSGQTTNTRR) shows a compositional bias: polar residues. One can recognise an ABC transporter 2 domain in the interval 858–1110 (VAFNNIRYSV…DLIEYFEGVE (253 aa)). 903-910 (GVSGAGKT) contributes to the ATP binding site. The region spanning 1183-1397 (TQCMACLWKQ…TLYGLVASQF (215 aa)) is the ABC transmembrane type-2 2 domain. The next 7 membrane-spanning stretches (helical) occupy residues 1202 to 1222 (YTVV…TIFW), 1242 to 1262 (YAAV…VVAV), 1290 to 1310 (LPYV…MIGF), 1317 to 1337 (FFWY…YGML), 1347 to 1367 (IASI…GFVI), 1378 to 1398 (WYSW…SQFG), and 1425 to 1445 (FLGV…VSFS).

This sequence belongs to the ABC transporter superfamily. ABCG family. PDR (TC 3.A.1.205) subfamily.

Its subcellular location is the membrane. Its function is as follows. May be a general defense protein. This is ABC transporter G family member 44 from Oryza sativa subsp. japonica (Rice).